The following is a 293-amino-acid chain: Shikimate kinase (293 aa).

87–97 (PLAGGLKSSSA) lines the ATP pocket.

It belongs to the GHMP kinase family. Archaeal shikimate kinase subfamily.

The protein localises to the cytoplasm. The catalysed reaction is shikimate + ATP = 3-phosphoshikimate + ADP + H(+). It participates in metabolic intermediate biosynthesis; chorismate biosynthesis; chorismate from D-erythrose 4-phosphate and phosphoenolpyruvate: step 5/7. This Methanosarcina mazei (strain ATCC BAA-159 / DSM 3647 / Goe1 / Go1 / JCM 11833 / OCM 88) (Methanosarcina frisia) protein is Shikimate kinase.